Consider the following 437-residue polypeptide: MIRFIFKHKKMHKPKELVFGQTIIQLNQVNGADKRKLIWLLIIKRSRQAFPYFQREDAVIYLDNAATTLKPQVLIDRTAEFYASAGSVHRSQYDAAQTVQYEQARTQVKEWVHAEDKHAVIWTSGTTHAINLVANGLMPQLNAEDEILISQADHHANFVTWHETAKKCGAKIQVLPILDNWLIDENALISALSEKTKLVALNFVSNVTGTEQPIKRLIQLIRKHSNALVLVDAAQAISHIKIDLQDLDADFLAFSAHKIYGPNGLGVLTGKLTALSQLQPLFFGGKMVDRVSNDRITFAELPYRLEAGTPNIAGVIGFNAVLDWLQKWDFTAAEQYAISLAESVKVRLKSYENCRLFNSPQASTVVCFVFDGIDCSDLSTLLSEQNIALRVGEHCAQPYLARLGERTTLRLSFAPYNTQEDVEAFFTALDKALDLLQ.

K258 is subject to N6-(pyridoxal phosphate)lysine.

This sequence belongs to the class-V pyridoxal-phosphate-dependent aminotransferase family. Csd subfamily. Pyridoxal 5'-phosphate is required as a cofactor.

It catalyses the reaction (sulfur carrier)-H + L-cysteine = (sulfur carrier)-SH + L-alanine. Its function is as follows. Catalyzes the removal of elemental sulfur and selenium atoms from L-cysteine, L-cystine, L-selenocysteine, and L-selenocystine to produce L-alanine. The sequence is that of Probable cysteine desulfurase (csd) from Haemophilus influenzae (strain ATCC 51907 / DSM 11121 / KW20 / Rd).